Reading from the N-terminus, the 124-residue chain is Small ribosomal subunit protein uS12 (124 aa).

Asp-89 is subject to 3-methylthioaspartic acid. A disordered region spans residues 104–124; that stretch reads TDGVENRKQSRSKYGTKRPKK. Residues 112–124 are compositionally biased toward basic residues; it reads QSRSKYGTKRPKK.

The protein belongs to the universal ribosomal protein uS12 family. Part of the 30S ribosomal subunit. Contacts proteins S8 and S17. May interact with IF1 in the 30S initiation complex.

Its function is as follows. With S4 and S5 plays an important role in translational accuracy. Functionally, interacts with and stabilizes bases of the 16S rRNA that are involved in tRNA selection in the A site and with the mRNA backbone. Located at the interface of the 30S and 50S subunits, it traverses the body of the 30S subunit contacting proteins on the other side and probably holding the rRNA structure together. The combined cluster of proteins S8, S12 and S17 appears to hold together the shoulder and platform of the 30S subunit. The protein is Small ribosomal subunit protein uS12 of Thermosipho melanesiensis (strain DSM 12029 / CIP 104789 / BI429).